A 912-amino-acid chain; its full sequence is Intercellular adhesion molecule 5 (912 aa).

An N-terminal signal peptide occupies residues 1 to 29; it reads MPGPSPGLRALLGFWVALGLGILRLSAVA. Topologically, residues 30–826 are extracellular; it reads QEPFWADLQP…RITVRVAGPW (797 aa). 9 Ig-like C2-type domains span residues 47–127, 132–232, 239–324, 332–395, 403–481, 486–561, 566–645, 659–734, and 738–819; these read GGSL…PLPP, GENF…RLLA, DSQS…LLTL, GKLV…NGSA, PRLD…VTLT, PALD…VAVT, PSFE…NPLG, PQMD…TVGV, and PVVA…RRIT. N53 carries an N-linked (GlcNAc...) (high mannose) asparagine glycan. Cystine bridges form between C54-C97 and C58-C101. N-linked (GlcNAc...) asparagine glycosylation is present at N134. An intrachain disulfide couples C139 to C195. Residues T179 and T181 each carry the phosphothreonine modification. Residues N192 and N211 are each glycosylated (N-linked (GlcNAc...) asparagine). A disulfide bridge links C246 with C297. Residues N311, N366, and N392 are each glycosylated (N-linked (GlcNAc...) asparagine). C339 and C378 are oxidised to a cystine. 3 disulfides stabilise this stretch: C410-C465, C493-C546, and C573-C638. N576 and N639 each carry an N-linked (GlcNAc...) asparagine glycan. A disulfide bridge links C666 with C717. The tract at residues 678–708 is disordered; the sequence is AAGPACARGRPSPRVRCSREGAPRPARPRVS. 3 N-linked (GlcNAc...) asparagine glycosylation sites follow: N756, N787, and N788. The cysteines at positions 761 and 806 are disulfide-linked. The chain crosses the membrane as a helical span at residues 827-847; sequence LWIAVGGAVGGAVLLAAGAGL. Over 848–912 the chain is Cytoplasmic; it reads AFYVQSTACK…EVFAIQLTSA (65 aa). Residues 880-902 are disordered; that stretch reads GGAGSGAEGGPEAEDSAESPAGG.

It belongs to the immunoglobulin superfamily. ICAM family. Glycosylation at Asn-53 is critical for functional folding. As to expression, expressed on neurons in the most rostral segment of the mammalian brain, the telencephalon.

It is found in the membrane. Its function is as follows. ICAM proteins are ligands for the leukocyte adhesion protein LFA-1 (integrin alpha-L/beta-2). The chain is Intercellular adhesion molecule 5 (ICAM5) from Oryctolagus cuniculus (Rabbit).